The sequence spans 179 residues: B-cell acute lymphoblastic leukemia-expressed protein (179 aa).

Disordered regions lie at residues 1–20 (MMKD…TDLQ) and 65–86 (RDTP…RGKA). A compositionally biased stretch (polar residues) spans 10 to 20 (SWASEESTDLQ).

The chain is B-cell acute lymphoblastic leukemia-expressed protein (BLACE) from Homo sapiens (Human).